The sequence spans 497 residues: Meiosis-specific serine/threonine-protein kinase MEK1 (497 aa).

Residues 47–102 (VKVGRNDKECQLVLTNPSISSVHCVFWCVFFDEDSIPMFYVKDCSLNGTYLNGLLL) form the FHA domain. One can recognise a Protein kinase domain in the interval 162 to 444 (EITNRIVGNG…SKQGLKHIWI (283 aa)). ATP is bound by residues 168–176 (VGNGTFGHV) and Lys-199. Asp-290 functions as the Proton acceptor in the catalytic mechanism.

It belongs to the protein kinase superfamily. CAMK Ser/Thr protein kinase family. CHEK2 subfamily.

It carries out the reaction L-seryl-[protein] + ATP = O-phospho-L-seryl-[protein] + ADP + H(+). It catalyses the reaction L-threonyl-[protein] + ATP = O-phospho-L-threonyl-[protein] + ADP + H(+). Probable protein kinase required for meiotic recombination. The chain is Meiosis-specific serine/threonine-protein kinase MEK1 (MEK1) from Saccharomyces cerevisiae (strain ATCC 204508 / S288c) (Baker's yeast).